We begin with the raw amino-acid sequence, 506 residues long: Bifunctional purine biosynthesis protein PurH (506 aa).

The MGS-like domain maps to 1–146; that stretch reads MARLALLSVS…KNFAHLTVLC (146 aa).

This sequence belongs to the PurH family.

It carries out the reaction (6R)-10-formyltetrahydrofolate + 5-amino-1-(5-phospho-beta-D-ribosyl)imidazole-4-carboxamide = 5-formamido-1-(5-phospho-D-ribosyl)imidazole-4-carboxamide + (6S)-5,6,7,8-tetrahydrofolate. It catalyses the reaction IMP + H2O = 5-formamido-1-(5-phospho-D-ribosyl)imidazole-4-carboxamide. It functions in the pathway purine metabolism; IMP biosynthesis via de novo pathway; 5-formamido-1-(5-phospho-D-ribosyl)imidazole-4-carboxamide from 5-amino-1-(5-phospho-D-ribosyl)imidazole-4-carboxamide (10-formyl THF route): step 1/1. It participates in purine metabolism; IMP biosynthesis via de novo pathway; IMP from 5-formamido-1-(5-phospho-D-ribosyl)imidazole-4-carboxamide: step 1/1. The chain is Bifunctional purine biosynthesis protein PurH from Nostoc sp. (strain PCC 7120 / SAG 25.82 / UTEX 2576).